The primary structure comprises 295 residues: MHPDLLPHLRCPVCGQPLHQADAAPPRALRCPAGHSFDIARQGYVNLLTGRAPHVGDTAEMIAAREEFLAAGHYDPFSAALATAAARAVPRRVRPGDGVGEPVAYPDLVVDAGAGTGRHLAAVLDAVPTAVGLALDVSKPALRRAARAHPRAGAAVCDTWGRLPLADATVAVLVNVFAPRNGPEFRRVLRPDGALLVVTPTAEHLVELVDRLGLLRVDPAKDARVADSLTRHFEPAGQSTHRHRLQLTRKEVLTLVGMGPSAWHTDPARLTARVAALSEPVTVTAAVRLARYRPI.

Residues Cys11, Cys14, Cys31, and His35 each contribute to the Zn(2+) site. S-adenosyl-L-methionine contacts are provided by residues Tyr74, 116 to 117, and His204; that span reads TG.

This sequence belongs to the methyltransferase superfamily. RlmA family.

Functionally, confers strong resistance to mycinamicin (MM) and tylosin (TY). May function as methyltransferase. In Micromonospora griseorubida, this protein is Putative 23S rRNA (guanine-N(1)-)-methyltransferase (myrA).